The following is a 160-amino-acid chain: Arginine repressor (160 aa).

It belongs to the ArgR family.

Its subcellular location is the cytoplasm. It participates in amino-acid biosynthesis; L-arginine biosynthesis [regulation]. Functionally, regulates arginine biosynthesis genes. In Anaeromyxobacter sp. (strain K), this protein is Arginine repressor.